We begin with the raw amino-acid sequence, 235 residues long: Pro-opiomelanocortin (235 aa).

The signal sequence occupies residues 1–26 (MPRFCNSRSGALLLALLLQTSIDVWS). Phenylalanine amide is present on Phe-87. Positions 88-128 (GPRNSSSAGGSAQRRAEEETAGGDGRPEPSPREGKRSYSME) are disordered. Over residues 112-128 (GRPEPSPREGKRSYSME) the composition is skewed to basic and acidic residues. Position 124 is an N-acetylserine; in Corticotropin (Ser-124). Position 136 is a valine amide (Val-136). Asn-152 carries N-linked (GlcNAc...) asparagine glycosylation. At Ser-154 the chain carries Phosphoserine. The disordered stretch occupies residues 169–209 (EQPDGLEQVLEPDTEKADGPYRVEHFRWGNPPKDKRYGGFM). The segment covering 181 to 205 (DTEKADGPYRVEHFRWGNPPKDKRY) has biased composition (basic and acidic residues).

This sequence belongs to the POMC family. Post-translationally, specific enzymatic cleavages at paired basic residues yield the different active peptides. As to expression, ACTH and MSH are produced by the pituitary gland.

The protein localises to the secreted. Stimulates the adrenal glands to release cortisol. In terms of biological role, anorexigenic peptide. Increases the pigmentation of skin by increasing melanin production in melanocytes. Functionally, increases the pigmentation of skin by increasing melanin production in melanocytes. Its function is as follows. Endogenous orexigenic opiate. Endogenous opiate. The chain is Pro-opiomelanocortin (Pomc) from Rattus norvegicus (Rat).